A 130-amino-acid chain; its full sequence is Large ribosomal subunit protein bL20 (130 aa).

It belongs to the bacterial ribosomal protein bL20 family.

Functionally, binds directly to 23S ribosomal RNA and is necessary for the in vitro assembly process of the 50S ribosomal subunit. It is not involved in the protein synthesizing functions of that subunit. This is Large ribosomal subunit protein bL20 from Solibacter usitatus (strain Ellin6076).